A 99-amino-acid chain; its full sequence is Transcription factor 1 (99 aa).

May be involved in preference for HM-URA DNA stretches follow at residues 52 to 77 (PVAR…SVGV) and 90 to 99 (EGLKYEDFAK). DNA-binding regions lie at residues phenylalanine 61 and 93-94 (KY).

Belongs to the bacterial histone-like protein family. Homodimer.

Selectively binds to and inhibits the transcription of hydroxymethyluracil-(hmUra)-containing DNA, such as SP01 DNA, by RNA polymerase in vitro. The protein is Transcription factor 1 (TF1) of Bacillus phage SP01 (Bacteriophage SP01).